The chain runs to 213 residues: Adenylate kinase (213 aa).

10 to 15 is an ATP binding site; it reads GSGKGT. The NMP stretch occupies residues 30 to 59; it reads STGDMLRTTVNKESVLGKNIQAIIKLGNLV. AMP-binding positions include T31, R36, 57 to 59, 85 to 88, and Q92; these read NLV and GFPR. The tract at residues 122–159 is LID; the sequence is GRMVHEPSGRIYHVTFNPPKQKGKDDITGENLIIRQDD. Residues R123 and 132–133 each bind ATP; that span reads IY. AMP contacts are provided by R156 and R167. C199 contributes to the ATP binding site.

This sequence belongs to the adenylate kinase family. In terms of assembly, monomer.

Its subcellular location is the cytoplasm. The enzyme catalyses AMP + ATP = 2 ADP. Its pathway is purine metabolism; AMP biosynthesis via salvage pathway; AMP from ADP: step 1/1. In terms of biological role, catalyzes the reversible transfer of the terminal phosphate group between ATP and AMP. Plays an important role in cellular energy homeostasis and in adenine nucleotide metabolism. The chain is Adenylate kinase from Baumannia cicadellinicola subsp. Homalodisca coagulata.